Here is a 542-residue protein sequence, read N- to C-terminus: Hydroxylamine reductase (542 aa).

4 residues coordinate [4Fe-4S] cluster: Cys-5, Cys-8, Cys-17, and Cys-23. Residues His-237, Glu-261, Cys-305, Cys-397, Cys-425, Cys-450, Glu-485, and Lys-487 each contribute to the hybrid [4Fe-2O-2S] cluster site. Cys-397 is subject to Cysteine persulfide.

The protein belongs to the HCP family. The cofactor is [4Fe-4S] cluster. Requires hybrid [4Fe-2O-2S] cluster as cofactor.

It is found in the cytoplasm. The catalysed reaction is A + NH4(+) + H2O = hydroxylamine + AH2 + H(+). Functionally, catalyzes the reduction of hydroxylamine to form NH(3) and H(2)O. This Acetivibrio thermocellus (strain ATCC 27405 / DSM 1237 / JCM 9322 / NBRC 103400 / NCIMB 10682 / NRRL B-4536 / VPI 7372) (Clostridium thermocellum) protein is Hydroxylamine reductase.